The chain runs to 718 residues: Cyclomaltodextrin glucanotransferase (718 aa).

An N-terminal signal peptide occupies residues 1–34 (MFQMAKRVLLSTTLTFSLLAGSALPFLPASAIYA). An A1 region spans residues 35–172 (DADTAVTNKQ…GIKIIIDFAP (138 aa)). D61, N63, N66, and N67 together coordinate Ca(2+). The cysteines at positions 77 and 84 are disulfide-linked. Residues G85 and D87 each contribute to the Ca(2+) site. 134–135 (YW) is a binding site for substrate. Ca(2+) is bound at residue N173. The segment at 173 to 236 (NHTSPAMETD…NLYDLADLNH (64 aa)) is b. H174 contributes to the substrate binding site. A Ca(2+)-binding site is contributed by I224. Position 227-230 (227-230 (NLYD)) interacts with substrate. Residue D233 coordinates Ca(2+). The interval 237–440 (NNSTIDTYFK…LRKSNPAIAY (204 aa)) is A2. Position 261 (R261) interacts with substrate. D263 functions as the Nucleophile in the catalytic mechanism. 266–267 (KH) contributes to the substrate binding site. H267 lines the Ca(2+) pocket. The active-site Proton donor is E291. H361, D405, and R409 together coordinate substrate. Positions 441–528 (GSTQQRWINN…ATAVWQYTAS (88 aa)) are c. Residues 529–614 (ETTPTIGHVG…SNAYNDFTIL (86 aa)) form a d region. The region spanning 532 to 612 (PTIGHVGPVM…VNSNAYNDFT (81 aa)) is the IPT/TIG domain. A CBM20 domain is found at 613-718 (ILSGDQVSVR…GTATVTINWQ (106 aa)). Residues 615 to 718 (SGDQVSVRFV…GTATVTINWQ (104 aa)) form an e region.

This sequence belongs to the glycosyl hydrolase 13 family. As to quaternary structure, monomer. It depends on Ca(2+) as a cofactor.

The protein resides in the secreted. It carries out the reaction Cyclizes part of a (1-&gt;4)-alpha-D-glucan chain by formation of a (1-&gt;4)-alpha-D-glucosidic bond.. In Bacillus licheniformis, this protein is Cyclomaltodextrin glucanotransferase (cgtA).